Here is a 443-residue protein sequence, read N- to C-terminus: Thymidine phosphorylase (443 aa).

The protein belongs to the thymidine/pyrimidine-nucleoside phosphorylase family. As to quaternary structure, homodimer.

It carries out the reaction thymidine + phosphate = 2-deoxy-alpha-D-ribose 1-phosphate + thymine. It participates in pyrimidine metabolism; dTMP biosynthesis via salvage pathway; dTMP from thymine: step 1/2. Functionally, the enzymes which catalyze the reversible phosphorolysis of pyrimidine nucleosides are involved in the degradation of these compounds and in their utilization as carbon and energy sources, or in the rescue of pyrimidine bases for nucleotide synthesis. This chain is Thymidine phosphorylase, found in Shewanella piezotolerans (strain WP3 / JCM 13877).